Here is a 347-residue protein sequence, read N- to C-terminus: Pre-B-cell leukemia transcription factor 1 (347 aa).

Positions 1–37 (MDDQPRLMHSHPGVGMAGHPSLSQHMQDGTGANEGDV) are disordered. Residues 38–232 (GRKQDIGDIL…VMILRSRFLD (195 aa)) form the PBC domain. Residues 45–124 (DILQQIMTIT…EGVAGPEKGG (80 aa)) form a PBC-A region. A PBC-B region spans residues 127-232 (AAAAAAAAAS…VMILRSRFLD (106 aa)). The homeobox; TALE-type DNA-binding region spans 233 to 295 (ARRKRRNFNK…NKRIRYKKNI (63 aa)). A compositionally biased stretch (polar residues) spans 318 to 331 (VHGSQANSPSTPSS). Positions 318-347 (VHGSQANSPSTPSSAGGYPSPCYQSDRRIQ) are disordered.

Belongs to the TALE/PBX homeobox family. As to quaternary structure, forms a heterodimer with isoform 2 of meis1; the interaction is necessary for neural fate induction. As to expression, shows broad, weak expression from blastula through gastrula stages. At stage 14/15, expressed in a broad arc that gives rise to the forebrain and eyes. More intensely expressed in the lateral neural folds (presumptive neural crest) and as horizontal stripes in the posterior neural plate that give rise to the hindbrain. As development proceeds, expression progresses posteriorly along the neural folds and at stage 21, expression is pronounced in the prospective hindbrain and in migratory neural crest cells. At later stages (stage 26), expression becomes intense within the dorsal portion of the forebrain, and in the optic cup, caudal branchial arch, peripheral to the pronephric anlage, and in the dorsal anterior half of the spinal cord. Expression remains robust in the hindbrain but gradually becomes more restricted. At stage 28, expressed in the dorsal lateral portion of the neural tube and in the somatic layer of the lateral plate mesoderm that surrounds the pronephric anlage.

It localises to the nucleus. In terms of biological role, acts as a transcriptional activator in complex with isoform 2 of meis1, to induce posterior neural and neural crest gene expression, and thereby specify hindbrain and neural crest cell fate. Binds to a highly conserved region in the promoter of the neural crest gene zic3. Required for the nuclear transport or retention of isoform 2 of meis1. This chain is Pre-B-cell leukemia transcription factor 1 (pbx1), found in Xenopus laevis (African clawed frog).